The primary structure comprises 209 residues: UPF0174 protein HP_1587 (209 aa).

This sequence belongs to the UPF0174 family.

The polypeptide is UPF0174 protein HP_1587 (Helicobacter pylori (strain ATCC 700392 / 26695) (Campylobacter pylori)).